A 64-amino-acid chain; its full sequence is Large ribosomal subunit protein bL35 (64 aa).

Disordered regions lie at residues 1-22 (MPKA…TGKI) and 34-64 (EHKP…LLNG). Residues 34–48 (EHKPSTRTRRLDGHT) are compositionally biased toward basic and acidic residues. Positions 50–64 (VSANDTQRVNSLLNG) are enriched in polar residues.

It belongs to the bacterial ribosomal protein bL35 family.

This is Large ribosomal subunit protein bL35 from Mycobacterium leprae (strain Br4923).